The primary structure comprises 84 residues: Putative pelota-like protein YCL001W-B (84 aa).

This sequence belongs to the eukaryotic release factor 1 family. Pelota subfamily. Highly divergent.

In Saccharomyces cerevisiae (strain ATCC 204508 / S288c) (Baker's yeast), this protein is Putative pelota-like protein YCL001W-B.